The primary structure comprises 277 residues: Putative hydro-lyase BPP3031 (277 aa).

The protein belongs to the D-glutamate cyclase family.

The protein is Putative hydro-lyase BPP3031 of Bordetella parapertussis (strain 12822 / ATCC BAA-587 / NCTC 13253).